The chain runs to 235 residues: Flavonoid 3',5'-methyltransferase (235 aa).

Residues Val-51, Glu-73, 75–76 (GV), Ser-81, Asp-99, and Ala-128 contribute to the S-adenosyl-L-methionine site. Asp-151 serves as a coordination point for a divalent metal cation. Asp-153 contacts S-adenosyl-L-methionine. A divalent metal cation-binding residues include Asp-177 and Asn-178.

The protein belongs to the class I-like SAM-binding methyltransferase superfamily. Cation-dependent O-methyltransferase family. CCoAMT subfamily. A divalent metal cation is required as a cofactor.

The protein localises to the cytoplasm. It catalyses the reaction S-adenosyl-L-methionine + a 3'-hydroxyflavonoid = S-adenosyl-L-homocysteine + a 3'-methoxyflavonoid.. It carries out the reaction S-adenosyl-L-methionine + a 5'-hydroxy-3'-methoxyflavonoid = S-adenosyl-L-homocysteine + a 3',5'-dimethoxyflavonoid.. Its pathway is pigment biosynthesis; anthocyanin biosynthesis. In terms of biological role, mediates O-methylation of anthocyanins. Anthocyanins are major pigments in grapes: at ripening initiation in red grapevine berries, the exocarp turns color from green to red and then to purple due to the accumulation and extent of methylation of anthocyanins. Catalyzes both 3' and 5' O-methylation of anthocyanins, with a preference for glycosylated substrates. Active on both anthocyanins and flavonols in vitro. Most active with delphinidin 3-glucoside but also acts on cyanidin 3-glucoside, cyanidin, myricetin, quercetin and quercetin 3-glucoside. Not able to methylate flavan type skeletons with chiral centers, such as catechins or dihydroquercetin. This is Flavonoid 3',5'-methyltransferase (FAOMT) from Vitis vinifera (Grape).